We begin with the raw amino-acid sequence, 664 residues long: Cytoskeleton-associated protein 2 (664 aa).

The segment at 1-38 (MAESRKRFLGRAARNPLPVTRDLQLPPTRRDQPAFREQ) is disordered. Residues 28–38 (TRRDQPAFREQ) show a composition bias toward basic and acidic residues. Residues 160-319 (PKQDSNVSKK…ASKDAARTDS (160 aa)) form an association with alpha- and beta-tubulin region. Position 186 is a phosphoserine (Ser-186). Disordered stretches follow at residues 254–273 (IRSL…SRPL), 283–328 (LDKE…MVKP), 366–393 (GKGK…NPVG), and 512–545 (AHAT…KVEV). Residues 300-309 (GSSQAPSRSI) show a composition bias toward polar residues. The segment covering 366–375 (GKGKGLKRPP) has biased composition (basic residues). Residues 533 to 545 (PGEENEHHGKVEV) are compositionally biased toward basic and acidic residues. The residue at position 561 (Thr-561) is a Phosphothreonine. Position 577 is a phosphoserine (Ser-577). Thr-579 is modified (phosphothreonine). The residue at position 584 (Ser-584) is a Phosphoserine.

It belongs to the CKAP2 family. As to quaternary structure, associates with alpha- and beta-tubulins.

Its subcellular location is the cytoplasm. The protein resides in the cytoskeleton. It localises to the spindle. The protein localises to the spindle pole. Possesses microtubule stabilizing properties. Involved in regulating aneuploidy, cell cycling, and cell death in a p53-dependent manner. The sequence is that of Cytoskeleton-associated protein 2 from Mus musculus (Mouse).